Consider the following 414-residue polypeptide: Putative competence-damage inducible protein (414 aa).

This sequence belongs to the CinA family.

In Limosilactobacillus fermentum (strain NBRC 3956 / LMG 18251) (Lactobacillus fermentum), this protein is Putative competence-damage inducible protein.